The following is a 453-amino-acid chain: UDP-N-acetylmuramoylalanine--D-glutamate ligase (453 aa).

119 to 125 (GTNGKTT) is a binding site for ATP.

This sequence belongs to the MurCDEF family.

Its subcellular location is the cytoplasm. It carries out the reaction UDP-N-acetyl-alpha-D-muramoyl-L-alanine + D-glutamate + ATP = UDP-N-acetyl-alpha-D-muramoyl-L-alanyl-D-glutamate + ADP + phosphate + H(+). The protein operates within cell wall biogenesis; peptidoglycan biosynthesis. Cell wall formation. Catalyzes the addition of glutamate to the nucleotide precursor UDP-N-acetylmuramoyl-L-alanine (UMA). This chain is UDP-N-acetylmuramoylalanine--D-glutamate ligase, found in Syntrophus aciditrophicus (strain SB).